The sequence spans 461 residues: Bifunctional protein GlmU (461 aa).

Positions 1–229 (MNKYVVILAA…FSESLGVNDR (229 aa)) are pyrophosphorylase. UDP-N-acetyl-alpha-D-glucosamine is bound by residues 8-11 (LAAG), lysine 22, glutamine 72, and 77-78 (GT). Aspartate 102 contributes to the Mg(2+) binding site. Positions 139, 154, 169, and 227 each coordinate UDP-N-acetyl-alpha-D-glucosamine. Asparagine 227 contacts Mg(2+). A linker region spans residues 230–250 (IALAQATKIMQRRINEEHMRN). The N-acetyltransferase stretch occupies residues 251–461 (GVSFIDPDTA…LPLAKDKEWE (211 aa)). Arginine 332 and lysine 350 together coordinate UDP-N-acetyl-alpha-D-glucosamine. Catalysis depends on histidine 362, which acts as the Proton acceptor. Positions 365 and 376 each coordinate UDP-N-acetyl-alpha-D-glucosamine. Acetyl-CoA-binding positions include 385–386 (NY), alanine 422, and arginine 439.

This sequence in the N-terminal section; belongs to the N-acetylglucosamine-1-phosphate uridyltransferase family. The protein in the C-terminal section; belongs to the transferase hexapeptide repeat family. In terms of assembly, homotrimer. Mg(2+) is required as a cofactor.

It is found in the cytoplasm. It carries out the reaction alpha-D-glucosamine 1-phosphate + acetyl-CoA = N-acetyl-alpha-D-glucosamine 1-phosphate + CoA + H(+). The enzyme catalyses N-acetyl-alpha-D-glucosamine 1-phosphate + UTP + H(+) = UDP-N-acetyl-alpha-D-glucosamine + diphosphate. The protein operates within nucleotide-sugar biosynthesis; UDP-N-acetyl-alpha-D-glucosamine biosynthesis; N-acetyl-alpha-D-glucosamine 1-phosphate from alpha-D-glucosamine 6-phosphate (route II): step 2/2. It functions in the pathway nucleotide-sugar biosynthesis; UDP-N-acetyl-alpha-D-glucosamine biosynthesis; UDP-N-acetyl-alpha-D-glucosamine from N-acetyl-alpha-D-glucosamine 1-phosphate: step 1/1. Its pathway is bacterial outer membrane biogenesis; LPS lipid A biosynthesis. Its function is as follows. Catalyzes the last two sequential reactions in the de novo biosynthetic pathway for UDP-N-acetylglucosamine (UDP-GlcNAc). The C-terminal domain catalyzes the transfer of acetyl group from acetyl coenzyme A to glucosamine-1-phosphate (GlcN-1-P) to produce N-acetylglucosamine-1-phosphate (GlcNAc-1-P), which is converted into UDP-GlcNAc by the transfer of uridine 5-monophosphate (from uridine 5-triphosphate), a reaction catalyzed by the N-terminal domain. The protein is Bifunctional protein GlmU of Lactobacillus johnsonii (strain CNCM I-12250 / La1 / NCC 533).